Here is a 144-residue protein sequence, read N- to C-terminus: Large ribosomal subunit protein uL13 (144 aa).

The protein belongs to the universal ribosomal protein uL13 family. Part of the 50S ribosomal subunit.

Its function is as follows. This protein is one of the early assembly proteins of the 50S ribosomal subunit, although it is not seen to bind rRNA by itself. It is important during the early stages of 50S assembly. The chain is Large ribosomal subunit protein uL13 from Mycoplasmopsis agalactiae (strain NCTC 10123 / CIP 59.7 / PG2) (Mycoplasma agalactiae).